Consider the following 690-residue polypeptide: UvrABC system protein B (690 aa).

The region spanning 39-422 (EGLDDGLSFQ…EQQHAGQVVE (384 aa)) is the Helicase ATP-binding domain. 52–59 (GVTGSGKT) is a binding site for ATP. The Beta-hairpin signature appears at 105–128 (YYDYYQPEAYVPSRDLFIEKDSSI). A Helicase C-terminal domain is found at 443–596 (QVDDLLAEIG…QIAFNLEHGI (154 aa)). In terms of domain architecture, UVR spans 640–675 (AREIKRLEKSMMECAKNLEFEKAAAARDDLFRLRER).

The protein belongs to the UvrB family. As to quaternary structure, forms a heterotetramer with UvrA during the search for lesions. Interacts with UvrC in an incision complex.

The protein resides in the cytoplasm. Its function is as follows. The UvrABC repair system catalyzes the recognition and processing of DNA lesions. A damage recognition complex composed of 2 UvrA and 2 UvrB subunits scans DNA for abnormalities. Upon binding of the UvrA(2)B(2) complex to a putative damaged site, the DNA wraps around one UvrB monomer. DNA wrap is dependent on ATP binding by UvrB and probably causes local melting of the DNA helix, facilitating insertion of UvrB beta-hairpin between the DNA strands. Then UvrB probes one DNA strand for the presence of a lesion. If a lesion is found the UvrA subunits dissociate and the UvrB-DNA preincision complex is formed. This complex is subsequently bound by UvrC and the second UvrB is released. If no lesion is found, the DNA wraps around the other UvrB subunit that will check the other stand for damage. The chain is UvrABC system protein B from Dechloromonas aromatica (strain RCB).